Here is a 294-residue protein sequence, read N- to C-terminus: Phosphatidylserine decarboxylase proenzyme (294 aa).

Active-site charge relay system; for autoendoproteolytic cleavage activity residues include Asp88, His145, and Ser248. Ser248 (schiff-base intermediate with substrate; via pyruvic acid; for decarboxylase activity) is an active-site residue. Pyruvic acid (Ser); by autocatalysis is present on Ser248.

This sequence belongs to the phosphatidylserine decarboxylase family. PSD-B subfamily. Prokaryotic type I sub-subfamily. As to quaternary structure, heterodimer of a large membrane-associated beta subunit and a small pyruvoyl-containing alpha subunit. It depends on pyruvate as a cofactor. Is synthesized initially as an inactive proenzyme. Formation of the active enzyme involves a self-maturation process in which the active site pyruvoyl group is generated from an internal serine residue via an autocatalytic post-translational modification. Two non-identical subunits are generated from the proenzyme in this reaction, and the pyruvate is formed at the N-terminus of the alpha chain, which is derived from the carboxyl end of the proenzyme. The autoendoproteolytic cleavage occurs by a canonical serine protease mechanism, in which the side chain hydroxyl group of the serine supplies its oxygen atom to form the C-terminus of the beta chain, while the remainder of the serine residue undergoes an oxidative deamination to produce ammonia and the pyruvoyl prosthetic group on the alpha chain. During this reaction, the Ser that is part of the protease active site of the proenzyme becomes the pyruvoyl prosthetic group, which constitutes an essential element of the active site of the mature decarboxylase.

The protein resides in the cell membrane. The catalysed reaction is a 1,2-diacyl-sn-glycero-3-phospho-L-serine + H(+) = a 1,2-diacyl-sn-glycero-3-phosphoethanolamine + CO2. Its pathway is phospholipid metabolism; phosphatidylethanolamine biosynthesis; phosphatidylethanolamine from CDP-diacylglycerol: step 2/2. Catalyzes the formation of phosphatidylethanolamine (PtdEtn) from phosphatidylserine (PtdSer). This chain is Phosphatidylserine decarboxylase proenzyme, found in Herminiimonas arsenicoxydans.